A 584-amino-acid chain; its full sequence is Complement component C8 alpha chain (584 aa).

The N-terminal stretch at 1–20 (MFAVVFFILSLMTCQPGVTA) is a signal peptide. The propeptide occupies 21–30 (QEKVNQRVRR). The TSP type-1 1 domain occupies 38 to 91 (TCQLSNWSEWTDCFPCQDKKYRHRSLLQPNKFGGTICSGDIWDQASCSSSTTCV). 7 disulfide bridges follow: Cys39/Cys74, Cys50/Cys84, Cys53/Cys90, Cys96/Cys108, Cys102/Cys121, Cys115/Cys130, and Cys140/Cys177. The C-linked (Man) tryptophan glycan is linked to Trp44. The LDL-receptor class A domain occupies 94 to 132 (AQCGQDFQCKETGRCLKRHLVCNGDQDCLDGSDEDDCED). Ca(2+) is bound by residues Leu113, Asn116, Asp118, Asp120, Asp126, and Glu127. The region spanning 135–498 (AIDEDCSQYE…QYLMEFNACR (364 aa)) is the MACPF domain. Transmembrane regions (beta stranded) follow at residues 248 to 256 (FGVTIGIGP), 259 to 266 (SPLLVGVG), 377 to 384 (GGSLGIQY), and 390 to 395 (VGGGLS). Cys375 and Cys399 are joined by a disulfide. Asn437 carries an N-linked (GlcNAc...) asparagine glycan. 4 disulfide bridges follow: Cys497–Cys544, Cys499–Cys515, Cys502–Cys517, and Cys519–Cys528. Residues 499–529 (CGPCFNNGVPILEGTSCRCQCRLGSLGAACE) form the EGF-like domain. The TSP type-1 2 domain occupies 539–583 (DGSWSCWSSWSVCRAGIQERRRECDNPAPQNGGASCPGRKVQTQA). C-linked (Man) tryptophan glycosylation is found at Trp542, Trp545, and Trp548. 2 disulfides stabilise this stretch: Cys551-Cys584 and Cys562-Cys574. Residues 562–584 (CDNPAPQNGGASCPGRKVQTQAC) form a disordered region.

This sequence belongs to the complement C6/C7/C8/C9 family. As to quaternary structure, heterotrimer of 3 chains: alpha (C8A), beta (C8B) and gamma (C8G); the alpha and gamma chains are disulfide bonded. Component of the membrane attack complex (MAC), composed of complement C5b, C6, C7, C8A, C8B, C8G and multiple copies of the pore-forming subunit C9.

It is found in the secreted. The protein resides in the target cell membrane. With respect to regulation, membrane attack complex (MAC) assembly is inhibited by CD59, thereby protecting self-cells from damage during complement activation. CD59 acts by binding to the beta-haipins of C8 (C8A and C8B), forming an intermolecular beta-sheet that prevents incorporation of the multiple copies of C9 required for complete formation of the osmolytic pore. MAC assembly is also inhibited by clusterin (CLU) chaperones that inhibit polymerization of C9. In terms of biological role, component of the membrane attack complex (MAC), a multiprotein complex activated by the complement cascade, which inserts into a target cell membrane and forms a pore, leading to target cell membrane rupture and cell lysis. The MAC is initiated by proteolytic cleavage of C5 into complement C5b in response to the classical, alternative, lectin and GZMK complement pathways. The complement pathways consist in a cascade of proteins that leads to phagocytosis and breakdown of pathogens and signaling that strengthens the adaptive immune system. C8A, together with C8B and C8G, inserts into the target membrane, but does not form pores by itself. During MAC assembly, associates with C5b, C6 and C7 to form the C5b8 intermediate complex that inserts into the target membrane and traverses the bilayer increasing membrane rigidity. The sequence is that of Complement component C8 alpha chain from Homo sapiens (Human).